The sequence spans 889 residues: MSANNSPPSAQKSVFPATVSAVLPAPSPCSSPKTGLSARLSNGSFSAPSLTNSRGSVHTVSFLLQIGLTRESVTIEAQELSLSAVKDLVCSIVYQKFPECGFFGMYDKILLFRHDMNSENILQLITSADEIHEGDLVEVVLSALATVEDFQIRPHALYVHSYKAPTFCDYCGEMLWGLVRQGLKCEGCGLNYHKRCAFKIPNNCSGVRKRRLSNVSLPGPGLSVPRPLQPECVPLLSEESHTHQEPSKRIPSWSGRPIWMEKMVMCRVKVPHTFAVHSYGRPTICQYCKRLLKGLFRQGMQCKDCKFNCHKRCASKVPRDCLGEVTFNGEPCSVGTDADMPMDIDSSDVNSDGSRGLDDSEEPSPPEDKMFFLDPTDLDVERDEETVKTISPSTSNNIPLMRVVQSIKHTKRRSSTVVKEGWMVHYTSRDNLRKRHYWRLDSKCLTLFQNESGSKYYKEIPLSEILRVSSPQDFTSISQGSNPHCFEIITDTVVYFVGENNGSSSHNPVLAATGVGLDVAQSWEKAIRQALMPVTPQASVCTSPGQGKDHNLATSISVSNCQVQENVDISSVYQIFADEVLGSGQFGIVYGGKHRKTGRDVAIKVIDKMRFPTKQESQLRNEVAILQNLHHPGIVNLECMFETPERVFVVMEKLHGDMLEMILSSEKSRLPERITKFMVTQILVALRNLHFKNIVHCDLKPENVLLASAEPFPQVKLCDFGFARIIGEKSFRRSVVGTPAYLAPEVLRSKGYNRSLDMWSVGVIVYVSLSGTFPFNEDEDINDQIQNAAFMYPPNPWREISSEAIDLINNLLQVKMRKRYSVDKSLSHPWLQDYQTWLDLREFETRIGERYITHESDDARWEIHAYTHNLEYPKHFIMAPNPDDMEEDP.

Ser-27, Ser-37, Ser-41, and Ser-44 each carry phosphoserine. A Phorbol-ester/DAG-type 1 zinc finger spans residues 154–204 (PHALYVHSYKAPTFCDYCGEMLWGLVRQGLKCEGCGLNYHKRCAFKIPNNC). Phosphoserine is present on residues Ser-213 and Ser-216. The segment at 271–321 (PHTFAVHSYGRPTICQYCKRLLKGLFRQGMQCKDCKFNCHKRCASKVPRDC) adopts a Phorbol-ester/DAG-type 2 zinc-finger fold. Residues 336 to 370 (TDADMPMDIDSSDVNSDGSRGLDDSEEPSPPEDKM) form a disordered region. Residues Ser-346, Ser-391, and Ser-395 each carry the phosphoserine modification. The PH domain occupies 416-532 (TVVKEGWMVH…WEKAIRQALM (117 aa)). Tyr-426 carries the phosphotyrosine modification. Ser-442 is modified (phosphoserine). Phosphotyrosine is present on Tyr-457. Position 535 is a phosphothreonine (Thr-535). Phosphoserine is present on Ser-539. A Protein kinase domain is found at 575–831 (IFADEVLGSG…VDKSLSHPWL (257 aa)). Residues 581–589 (LGSGQFGIV) and Lys-604 contribute to the ATP site. Residue Asp-698 is the Proton acceptor of the active site. A Phosphoserine; by PKC modification is found at Ser-730. Ser-734 is subject to Phosphoserine; by autocatalysis. Residue Tyr-741 is modified to Phosphotyrosine.

The protein belongs to the protein kinase superfamily. CAMK Ser/Thr protein kinase family. PKD subfamily. Mg(2+) is required as a cofactor.

Its subcellular location is the cytoplasm. The protein localises to the membrane. It carries out the reaction L-seryl-[protein] + ATP = O-phospho-L-seryl-[protein] + ADP + H(+). It catalyses the reaction L-threonyl-[protein] + ATP = O-phospho-L-threonyl-[protein] + ADP + H(+). With respect to regulation, activated by DAG and phorbol esters. Phorbol-ester/DAG-type domains 1 and 2 bind both DAG and phorbol ester with high affinity and mediate translocation to the cell membrane. Autophosphorylation of Ser-734 and phosphorylation of Ser-730 by PKC relieves auto-inhibition by the PH domain. Its function is as follows. Converts transient diacylglycerol (DAG) signals into prolonged physiological effects, downstream of PKC. Involved in resistance to oxidative stress. The polypeptide is Serine/threonine-protein kinase D3 (Prkd3) (Mus musculus (Mouse)).